A 594-amino-acid polypeptide reads, in one-letter code: Class I diterpene synthase TPS6, chloroplastic (594 aa).

Residues Asp-330, Asp-334, Asn-474, Gln-477, and Glu-482 each contribute to the Mg(2+) site. The DDXXD motif motif lies at 330 to 334 (DDFFD).

Belongs to the terpene synthase family. Mg(2+) is required as a cofactor. Mostly expressed in trichomes of leaves and fruits.

It localises to the plastid. It is found in the chloroplast. It carries out the reaction peregrinol diphosphate = labd-13(16),14-diene-9-ol + diphosphate. The catalysed reaction is 9alpha-copalyl diphosphate = syn-isopimara-7,15-diene + diphosphate. It participates in secondary metabolite biosynthesis; terpenoid biosynthesis. Involved in the biosynthesis of labdane-type diterpenoid including cleroda-dienols, and peregrinol lactones and furan derivatives, dopaminergic diterpenoids that can bind to dopamine receptors in the human pituitary gland, have probably ability to lower prolactin levels, and are used to treat menstrual cycle disorders (e.g. premenstrual syndrome and mastodynia). Terpene synthase the catalyzes the conversion of peregrinol diphosphate to labda-13(16),14-dien-9-ol, and of syn-copalyl diphosophate to dehydroabietadiene and syn-isopimara-7,15-diene. In Vitex agnus-castus (Chaste tree), this protein is Class I diterpene synthase TPS6, chloroplastic.